The primary structure comprises 264 residues: Probable septum site-determining protein MinC (264 aa).

Residues Ser-103 to Ala-147 form a disordered region. A compositionally biased stretch (basic and acidic residues) spans Gly-110–Ala-122. Residues Asp-124–Ala-147 are compositionally biased toward low complexity.

This sequence belongs to the MinC family. As to quaternary structure, interacts with MinD and FtsZ.

Its function is as follows. Cell division inhibitor that blocks the formation of polar Z ring septums. Rapidly oscillates between the poles of the cell to destabilize FtsZ filaments that have formed before they mature into polar Z rings. Prevents FtsZ polymerization. The chain is Probable septum site-determining protein MinC from Ralstonia pickettii (strain 12J).